A 133-amino-acid polypeptide reads, in one-letter code: MKDNIELTIFTPEKNIKIGEIKEVITEGLDGDLAILPNHVNMITYLKPTITKYIDLNGNKNNIFTSSGVLKVEDNKVYIICDASEKPEDIDIKRAENAKKRAEERLRNKKEIDVKRAELALFRSIARIKIKEL.

It belongs to the ATPase epsilon chain family. In terms of assembly, F-type ATPases have 2 components, CF(1) - the catalytic core - and CF(0) - the membrane proton channel. CF(1) has five subunits: alpha(3), beta(3), gamma(1), delta(1), epsilon(1). CF(0) has three main subunits: a, b and c.

The protein resides in the cell membrane. In terms of biological role, produces ATP from ADP in the presence of a proton gradient across the membrane. The polypeptide is ATP synthase epsilon chain (Clostridium botulinum (strain 657 / Type Ba4)).